Reading from the N-terminus, the 525-residue chain is Delta(24)-sterol reductase homolog dhcr-24 (525 aa).

A run of 2 helical transmembrane segments spans residues 27-47 (WVFVVPFLLPLSFLFNTVFDF) and 214-234 (SLFFAIPWSQGTICFLVAATI). One can recognise an FAD-binding PCMH-type domain in the interval 47–239 (FRNRIVHAVN…VAATIKIIPC (193 aa)).

The protein belongs to the FAD-binding oxidoreductase/transferase type 4 family. Requires FAD as cofactor.

It localises to the endoplasmic reticulum membrane. The protein resides in the golgi apparatus membrane. The catalysed reaction is cholesterol + NADP(+) = desmosterol + NADPH + H(+). It catalyses the reaction lanosterol + NADPH + H(+) = 24,25-dihydrolanosterol + NADP(+). The enzyme catalyses 5alpha-cholest-8-en-3beta-ol + NADP(+) = zymosterol + NADPH + H(+). The protein operates within steroid biosynthesis; cholesterol biosynthesis. Functionally, catalyzes the reduction of the delta-24 double bond of sterol intermediates during cholesterol biosynthesis. The chain is Delta(24)-sterol reductase homolog dhcr-24 from Caenorhabditis elegans.